The following is a 200-amino-acid chain: Small ribosomal subunit protein eS1 (200 aa).

It belongs to the eukaryotic ribosomal protein eS1 family.

The polypeptide is Small ribosomal subunit protein eS1 (Thermococcus onnurineus (strain NA1)).